Consider the following 469-residue polypeptide: Cysteine--tRNA ligase (469 aa).

Position 29 (cysteine 29) interacts with Zn(2+). Positions 31 to 41 (PTVYNYIHIGN) match the 'HIGH' region motif. Zn(2+) is bound by residues cysteine 210, histidine 235, and glutamate 239. The 'KMSKS' region signature appears at 267–271 (KMSKS). An ATP-binding site is contributed by lysine 270.

This sequence belongs to the class-I aminoacyl-tRNA synthetase family. As to quaternary structure, monomer. Zn(2+) serves as cofactor.

It is found in the cytoplasm. It catalyses the reaction tRNA(Cys) + L-cysteine + ATP = L-cysteinyl-tRNA(Cys) + AMP + diphosphate. In Thermosipho melanesiensis (strain DSM 12029 / CIP 104789 / BI429), this protein is Cysteine--tRNA ligase.